We begin with the raw amino-acid sequence, 360 residues long: Geranylgeranyl pyrophosphate synthase 3, chloroplastic (360 aa).

The N-terminal 39 residues, 1–39 (MATTVHLSSFSLFIQSRGRRDNSISSVKSLKKRTGLSPS), are a transit peptide targeting the chloroplast. The disordered stretch occupies residues 24–54 (ISSVKSLKKRTGLSPSSALTSQGGRDMIPPE). Polar residues predominate over residues 36 to 46 (LSPSSALTSQG). Isopentenyl diphosphate-binding residues include K106, R109, and H138. D145 and D151 together coordinate Mg(2+). Residue R156 participates in dimethylallyl diphosphate binding. An isopentenyl diphosphate-binding site is contributed by R157. Dimethylallyl diphosphate-binding residues include K245, T246, Q283, K300, and K310.

It belongs to the FPP/GGPP synthase family. In terms of assembly, monomer. Mg(2+) is required as a cofactor. In terms of tissue distribution, mainly expressed in roots.

The protein resides in the plastid. Its subcellular location is the chloroplast. It catalyses the reaction isopentenyl diphosphate + dimethylallyl diphosphate = (2E)-geranyl diphosphate + diphosphate. The catalysed reaction is isopentenyl diphosphate + (2E)-geranyl diphosphate = (2E,6E)-farnesyl diphosphate + diphosphate. It carries out the reaction isopentenyl diphosphate + (2E,6E)-farnesyl diphosphate = (2E,6E,10E)-geranylgeranyl diphosphate + diphosphate. It functions in the pathway isoprenoid biosynthesis; farnesyl diphosphate biosynthesis; farnesyl diphosphate from geranyl diphosphate and isopentenyl diphosphate: step 1/1. It participates in isoprenoid biosynthesis; geranyl diphosphate biosynthesis; geranyl diphosphate from dimethylallyl diphosphate and isopentenyl diphosphate: step 1/1. Its pathway is isoprenoid biosynthesis; geranylgeranyl diphosphate biosynthesis; geranylgeranyl diphosphate from farnesyl diphosphate and isopentenyl diphosphate: step 1/1. In terms of biological role, catalyzes the trans-addition of the three molecules of IPP onto DMAPP to form geranylgeranyl pyrophosphate. The protein is Geranylgeranyl pyrophosphate synthase 3, chloroplastic (GGPP3) of Arabidopsis thaliana (Mouse-ear cress).